A 535-amino-acid polypeptide reads, in one-letter code: MASLSLAPVNIFKAGADEERAETARLSSFIGAIAIGDLVKSTLGPKGMDKILLSSGRDASLMVTNDGATILKNIGVDNPAAKVLVDMSRVQDDEVGDGTTSVTVLAAELLREAESLIAKKIHPQTIIAGWREATKAAREALLSSAVDHGSDEVKFWQDLMNIAGTTLSSKLLTHHKDHFTKLAVEAVLRLKGSGNLEAIHVIKKLGGSLADSYLDEGFLLDKKIGVNQPKRIENAKILIANTGMDTDKIKIFGSRVRVDSTAKVAEIEHAEKEKMKEKVERILKHGINCFINRQLIYNYPEQLFGAAGVMAIEHADFAGVERLALVTGGEIASTFDHPELVKLGSCKLIEEVMIGEDKLIHFSGVALGEACTIVLRGATQQILDEAERSLHDALCVLAQTVKDPRTVYGGGCSEMLMAHAVTMLASRTPGKEAVAMESFAKALRMLPTIIADNAGYDSADLVAQLRAAHSEGRITAGLDMKEGSIGDMAVLGITESFQVKRQVLLSAAEAAEVILRVDNIIKAAPRKRVPDHHPC.

Ala2 carries the post-translational modification N-acetylalanine. Ser3 bears the Phosphoserine mark. Lys13 bears the N6-acetyllysine mark. Gly44 contacts ADP. Gly44 provides a ligand contact to ATP. Ser60 is modified (phosphoserine). Residue Asp97 participates in Mg(2+) binding. ADP-binding residues include Gly98, Thr99, Thr100, and Ser101. The ATP site is built by Gly98, Thr99, and Thr100. Lys154 is subject to N6-acetyllysine. The ADP site is built by Ser168 and Ser169. An N6-acetyllysine modification is found at Lys181. Residue Lys248 forms a Glycyl lysine isopeptide (Lys-Gly) (interchain with G-Cter in SUMO2) linkage. A Phosphoserine modification is found at Ser260. Thr261 bears the Phosphothreonine mark. Residues Gly410, Glu495, and Lys500 each contribute to the ADP site. Positions 495 and 500 each coordinate ATP.

This sequence belongs to the TCP-1 chaperonin family. As to quaternary structure, component of the chaperonin-containing T-complex (TRiC), a hexadecamer composed of two identical back-to-back stacked rings enclosing a protein folding chamber. Each ring is made up of eight different subunits: TCP1/CCT1, CCT2, CCT3, CCT4, CCT5, CCT6A/CCT6, CCT7, CCT8. Interacts with PACRG. Interacts with FLCN. Interacts with DLEC1. Interacts with SVEP1.

The protein localises to the cytoplasm. It carries out the reaction ATP + H2O = ADP + phosphate + H(+). Functionally, component of the chaperonin-containing T-complex (TRiC), a molecular chaperone complex that assists the folding of actin, tubulin and other proteins upon ATP hydrolysis. The TRiC complex mediates the folding of WRAP53/TCAB1, thereby regulating telomere maintenance. As part of the TRiC complex may play a role in the assembly of BBSome, a complex involved in ciliogenesis regulating transports vesicles to the cilia. The protein is T-complex protein 1 subunit beta (Cct2) of Rattus norvegicus (Rat).